Consider the following 427-residue polypeptide: Queuine tRNA-ribosyltransferase catalytic subunit (427 aa).

Residue aspartate 99 is the Proton acceptor of the active site. Substrate is bound by residues 99–103 (DSGGF), aspartate 153, glutamine 196, and glycine 223. The RNA binding stretch occupies residues 254-260 (GVGFAAD). The Nucleophile role is filled by aspartate 273. The tract at residues 278–282 (TRTAR) is RNA binding; important for wobble base 34 recognition. 4 residues coordinate Zn(2+): cysteine 311, cysteine 313, cysteine 316, and histidine 341. The segment at 395 to 427 (PADPERIDEQDQKPKTEKRRETEDVAEEQVASS) is disordered. The span at 397 to 417 (DPERIDEQDQKPKTEKRRETE) shows a compositional bias: basic and acidic residues.

Belongs to the queuine tRNA-ribosyltransferase family. As to quaternary structure, heterodimer of a catalytic subunit and an accessory subunit. Zn(2+) serves as cofactor.

It is found in the cytoplasm. It catalyses the reaction guanosine(34) in tRNA + queuine = queuosine(34) in tRNA + guanine. In terms of biological role, catalytic subunit of the queuine tRNA-ribosyltransferase (TGT) that catalyzes the base-exchange of a guanine (G) residue with queuine (Q) at position 34 (anticodon wobble position) in tRNAs with GU(N) anticodons (tRNA-Asp, -Asn, -His and -Tyr), resulting in the hypermodified nucleoside queuosine (7-(((4,5-cis-dihydroxy-2-cyclopenten-1-yl)amino)methyl)-7-deazaguanosine). Catalysis occurs through a double-displacement mechanism. The nucleophile active site attacks the C1' of nucleotide 34 to detach the guanine base from the RNA, forming a covalent enzyme-RNA intermediate. The proton acceptor active site deprotonates the incoming queuine, allowing a nucleophilic attack on the C1' of the ribose to form the product. The chain is Queuine tRNA-ribosyltransferase catalytic subunit (Tgt) from Drosophila melanogaster (Fruit fly).